Here is a 126-residue protein sequence, read N- to C-terminus: Histone H2B 1.2 (126 aa).

Residues 1–12 show a composition bias toward low complexity; that stretch reads MPEPAKSAPAPK. A disordered region spans residues 1–35; sequence MPEPAKSAPAPKKGSKKAVTKTPKKDGKKRRKSRK. 2 positions are modified to N6-acetyllysine: Lys6 and Lys13. A Phosphoserine modification is found at Ser15. Lys16 and Lys21 each carry N6-acetyllysine. The O-linked (GlcNAc) serine glycan is linked to Ser113. Residue Lys121 forms a Glycyl lysine isopeptide (Lys-Gly) (interchain with G-Cter in ubiquitin) linkage.

Belongs to the histone H2B family. In terms of assembly, the nucleosome is a histone octamer containing two molecules each of H2A, H2B, H3 and H4 assembled in one H3-H4 heterotetramer and two H2A-H2B heterodimers. The octamer wraps approximately 147 bp of DNA. In terms of processing, monoubiquitination of Lys-121 by BRE1 gives a specific tag for epigenetic transcriptional activation and is also prerequisite for histone H3 'Lys-4' and 'Lys-79' methylation. Phosphorylated on Ser-15 during developmentally programmed apoptosis; which may facilitate apoptotic chromatin condensation. Post-translationally, glcNAcylation at Ser-113 promotes monoubiquitination of Lys-121. It fluctuates in response to extracellular glucose, and associates with transcribed genes.

It is found in the nucleus. Its subcellular location is the chromosome. In terms of biological role, core component of nucleosome. Nucleosomes wrap and compact DNA into chromatin, limiting DNA accessibility to the cellular machineries which require DNA as a template. Histones thereby play a central role in transcription regulation, DNA repair, DNA replication and chromosomal stability. DNA accessibility is regulated via a complex set of post-translational modifications of histones, also called histone code, and nucleosome remodeling. The polypeptide is Histone H2B 1.2 (Xenopus laevis (African clawed frog)).